The following is a 330-amino-acid chain: Tetraacyldisaccharide 4'-kinase (330 aa).

58 to 65 (TVGGSGKT) is a binding site for ATP.

Belongs to the LpxK family.

It catalyses the reaction a lipid A disaccharide + ATP = a lipid IVA + ADP + H(+). It functions in the pathway glycolipid biosynthesis; lipid IV(A) biosynthesis; lipid IV(A) from (3R)-3-hydroxytetradecanoyl-[acyl-carrier-protein] and UDP-N-acetyl-alpha-D-glucosamine: step 6/6. In terms of biological role, transfers the gamma-phosphate of ATP to the 4'-position of a tetraacyldisaccharide 1-phosphate intermediate (termed DS-1-P) to form tetraacyldisaccharide 1,4'-bis-phosphate (lipid IVA). This chain is Tetraacyldisaccharide 4'-kinase, found in Shewanella pealeana (strain ATCC 700345 / ANG-SQ1).